The sequence spans 226 residues: MTSKTTASLLAICVACAASAIAGTALCADRRNAPAQAGAGAAAAVSGDAHEQPAAEAPAEEEEETPAVAATDGKLVLPNGQDITPDHMENGRWYTAEDIPTYKIAEEGAVDWATFSGYRRYSAECHVCHGPDGEGSTYAPALRKSVLTMGYYDFLEIAASGKQEVNTAANLVMPAFGTNKNVWCYIDDIYAYLLARGTGDLPRGRPAKREDKSDEFVAQEDSCMSG.

An N-terminal signal peptide occupies residues 1–22; the sequence is MTSKTTASLLAICVACAASAIA. The segment at 43–68 is disordered; that stretch reads AAVSGDAHEQPAAEAPAEEEEETPAV. Heme is bound by residues Cys125, Cys128, His129, and Met173. Positions 203-226 are disordered; it reads RGRPAKREDKSDEFVAQEDSCMSG.

In terms of processing, binds 1 heme group per subunit.

The protein resides in the periplasm. The protein is Cytochrome c-553I (cycB) of Paracoccus denitrificans.